Reading from the N-terminus, the 149-residue chain is Large ribosomal subunit protein bL9 (149 aa).

The protein belongs to the bacterial ribosomal protein bL9 family.

Binds to the 23S rRNA. The sequence is that of Large ribosomal subunit protein bL9 from Rubrobacter xylanophilus (strain DSM 9941 / JCM 11954 / NBRC 16129 / PRD-1).